Consider the following 585-residue polypeptide: Arginine--tRNA ligase (585 aa).

Positions 131-141 (ANPTGPMHVGH) match the 'HIGH' region motif.

This sequence belongs to the class-I aminoacyl-tRNA synthetase family. Monomer.

The protein resides in the cytoplasm. It carries out the reaction tRNA(Arg) + L-arginine + ATP = L-arginyl-tRNA(Arg) + AMP + diphosphate. The protein is Arginine--tRNA ligase of Agrobacterium fabrum (strain C58 / ATCC 33970) (Agrobacterium tumefaciens (strain C58)).